We begin with the raw amino-acid sequence, 224 residues long: MKNIEKLEQSLTYEFKDKNLLIHALTHKSFKKSYNNERLEFLGDAVLDLVVGEYLFHKFAKDAEGDLSKLRAALVNEKSFAKIANSLNLGDFIFMSVAEENNGGKEKPSILSDALEAIIGAIHLEAGFEFAKTIALRLIEKNFPQIDAKILIKDYKTKLQEITQGKIGQTPQYETVRAFGPDHLKQFEIALMLDGKELARAIAGSKKEAQQMAAKIALEKLGAL.

The region spanning 4–127 (IEKLEQSLTY…IIGAIHLEAG (124 aa)) is the RNase III domain. Position 40 (E40) interacts with Mg(2+). D44 is a catalytic residue. Mg(2+) is bound by residues D113 and E116. E116 is a catalytic residue. The DRBM domain occupies 154–223 (DYKTKLQEIT…AKIALEKLGA (70 aa)).

It belongs to the ribonuclease III family. Homodimer. Mg(2+) is required as a cofactor.

Its subcellular location is the cytoplasm. It carries out the reaction Endonucleolytic cleavage to 5'-phosphomonoester.. Digests double-stranded RNA. Involved in the processing of primary rRNA transcript to yield the immediate precursors to the large and small rRNAs (23S and 16S). Processes some mRNAs, and tRNAs when they are encoded in the rRNA operon. Processes pre-crRNA and tracrRNA of type II CRISPR loci if present in the organism. The sequence is that of Ribonuclease 3 from Campylobacter jejuni subsp. jejuni serotype O:6 (strain 81116 / NCTC 11828).